The primary structure comprises 352 residues: uncharacterized protein (352 aa).

The stretch at 285–352 forms a coiled coil; that stretch reads FQHLRNARER…IKSEIRRLQR (68 aa).

This is an uncharacterized protein from Emericella nidulans (strain FGSC A4 / ATCC 38163 / CBS 112.46 / NRRL 194 / M139) (Aspergillus nidulans).